The primary structure comprises 130 residues: MYSFEQAITQLFQQLSLSIPDTIEPVIGVKVGEFACHITEHPVGQILMFTLPSLDNNNEKETLLSHNIFSQDILKPILSWDEVGGHPVLWNRQPLNNLDNNSLYTQLEMLVQGAERLQTSSLISPPRSFS.

Positive regulator of YopE. This Yersinia enterocolitica serotype O:8 / biotype 1B (strain NCTC 13174 / 8081) protein is YopE regulator (yerA).